The sequence spans 62 residues: Large ribosomal subunit protein bL28 (62 aa).

The tract at residues 1–28 is disordered; sequence MARVCTITGRKARSGNSRSHAMNATKRK.

The protein belongs to the bacterial ribosomal protein bL28 family.

The sequence is that of Large ribosomal subunit protein bL28 from Bacillus anthracis (strain CDC 684 / NRRL 3495).